Consider the following 369-residue polypeptide: Probable dual-specificity RNA methyltransferase RlmN (369 aa).

Catalysis depends on Glu-108, which acts as the Proton acceptor. Residues 114-357 (YPDRATVCIS…CTVRDTRGQE (244 aa)) enclose the Radical SAM core domain. Cys-121 and Cys-362 form a disulfide bridge. Residues Cys-128, Cys-132, and Cys-135 each contribute to the [4Fe-4S] cluster site. Residues 183–184 (GE), Ser-217, 240–242 (SLH), and Asn-319 each bind S-adenosyl-L-methionine. Residue Cys-362 is the S-methylcysteine intermediate of the active site.

The protein belongs to the radical SAM superfamily. RlmN family. [4Fe-4S] cluster serves as cofactor.

Its subcellular location is the cytoplasm. It carries out the reaction adenosine(2503) in 23S rRNA + 2 reduced [2Fe-2S]-[ferredoxin] + 2 S-adenosyl-L-methionine = 2-methyladenosine(2503) in 23S rRNA + 5'-deoxyadenosine + L-methionine + 2 oxidized [2Fe-2S]-[ferredoxin] + S-adenosyl-L-homocysteine. The catalysed reaction is adenosine(37) in tRNA + 2 reduced [2Fe-2S]-[ferredoxin] + 2 S-adenosyl-L-methionine = 2-methyladenosine(37) in tRNA + 5'-deoxyadenosine + L-methionine + 2 oxidized [2Fe-2S]-[ferredoxin] + S-adenosyl-L-homocysteine. Functionally, specifically methylates position 2 of adenine 2503 in 23S rRNA and position 2 of adenine 37 in tRNAs. The chain is Probable dual-specificity RNA methyltransferase RlmN from Saccharopolyspora erythraea (strain ATCC 11635 / DSM 40517 / JCM 4748 / NBRC 13426 / NCIMB 8594 / NRRL 2338).